The chain runs to 235 residues: Eukaryotic translation initiation factor 4E-1 (235 aa).

The interval 1–52 (MVVEDSMKATSAEDLSNSIANQNPRGRGGDEDEELEEGEIVGDDDLDSSNLS) is disordered. The segment covering 13 to 24 (EDLSNSIANQNP) has biased composition (polar residues). Residues 30-47 (DEDEELEEGEIVGDDDLD) are compositionally biased toward acidic residues. EIF4G-binding regions lie at residues 60-63 (HPLE) and 70-106 (FDNPSAKSKQATWGASIRPIYTFSTVEEFWSVYNNIH). Residues 78 to 83 (KQATWG), Lys110, and 128 to 129 (WE) contribute to the mRNA site. Cysteines 133 and 171 form a disulfide. Positions 154–163 (YTLLAMIGEQ) are EIF4G-binding. MRNA contacts are provided by residues 178-183 (RSGQDK) and 223-227 (KKFDR).

The protein belongs to the eukaryotic initiation factor 4E family. As to quaternary structure, EIF4F is a multi-subunit complex, the composition of which varies with external and internal environmental conditions. It is composed of at least EIF4A, EIF4E and EIF4G. EIF4E is also known to interact with other partners. Interacts directly with eIF4G. In higher plants two isoforms of EIF4F have been identified, named isoform EIF4F and isoform EIF(iso)4F. Isoform EIF4F has subunits p220 and p26, whereas isoform EIF(iso)4F has subunits p82 and p28. (Microbial infection) Interacts with potyvirus viral genome-linked protein (VPg); this interaction is possible in susceptible hosts but impaired in resistant plants. According to the redox status, the Cys-133-Cys-171 disulfide bridge may have a role in regulating protein function by affecting its ability to bind capped mRNA.

It is found in the nucleus. The protein resides in the cytoplasm. Functionally, component of the protein complex eIF4F, which is involved in the recognition of the mRNA cap, ATP-dependent unwinding of 5'-terminal secondary structure and recruitment of mRNA to the ribosome. Recognizes and binds the 7-methylguanosine-containing mRNA cap during an early step in the initiation of protein synthesis and facilitates ribosome binding by inducing the unwinding of the mRNAs secondary structures. Key component of recessive resistance to potyviruses and Tombusviridae genus Carmovirus such as melon necrotic spot virus (MNSV). In terms of biological role, (Microbial infection) Susceptibility host factor required for viral infection by recruiting viral RNAs, including uncapped and non-polyadenylated RNA, to the host ribosomal complex via an interaction with viral genome-linked protein (VPg). This Cucumis melo (Muskmelon) protein is Eukaryotic translation initiation factor 4E-1.